The primary structure comprises 192 residues: Ion-translocating oxidoreductase complex subunit B (192 aa).

Residues 1 to 26 (MNAIWIAVAAVSLLGLAFGAILGYAS) are hydrophobic. A 4Fe-4S domain is found at 32–91 (EDDPVVEKIDEILPQSQCGQCGYPGCRPYAEAISCNGEKINRCAPGGEAVMLKIAELLNV). [4Fe-4S] cluster is bound by residues C49, C52, C57, C74, C117, C120, C123, C127, C147, C150, C153, and C157. 4Fe-4S ferredoxin-type domains follow at residues 108–137 (MVAF…GATR) and 138–167 (AMHT…LQPV).

Belongs to the 4Fe4S bacterial-type ferredoxin family. RnfB subfamily. As to quaternary structure, the complex is composed of six subunits: RsxA, RsxB, RsxC, RsxD, RsxE and RsxG. It depends on [4Fe-4S] cluster as a cofactor.

The protein localises to the cell inner membrane. Part of a membrane-bound complex that couples electron transfer with translocation of ions across the membrane. Required to maintain the reduced state of SoxR. The protein is Ion-translocating oxidoreductase complex subunit B of Escherichia coli O17:K52:H18 (strain UMN026 / ExPEC).